Here is a 330-residue protein sequence, read N- to C-terminus: MKKSFIHQQEEISFVKNTFTQYLIAKLDVVEVQGPILSRVGDGMQDNLSGTENPVSVNVLKIPNATFEVVHSLAKWKRHTLARFGFNEGEGLVVNMKALRPDEDSLDQTHSVYVDQWDWEKVIPDGKRNLAYLKETVETIYKVIRLTELAVEARYDIEAVLPKKITFIHTEELVAKYPDLTPKERENAITKEFGAVFLIGIGGGLPDGKPHDGRAPDYDDWTTETENGYHGLNGDLLVWNDQLGSAFELSSMGIRVDEEALKRQVEMTGDQDRLAFDWHKSLLNGLFPLTIGGGIGQSRMVMFLLRKKHIGEVQTSVWPQEVRDSYDNIL.

This sequence belongs to the class-II aminoacyl-tRNA synthetase family. AsnA subfamily.

It is found in the cytoplasm. It carries out the reaction L-aspartate + NH4(+) + ATP = L-asparagine + AMP + diphosphate + H(+). The protein operates within amino-acid biosynthesis; L-asparagine biosynthesis; L-asparagine from L-aspartate (ammonia route): step 1/1. The sequence is that of Aspartate--ammonia ligase from Streptococcus pyogenes serotype M6 (strain ATCC BAA-946 / MGAS10394).